The following is a 389-amino-acid chain: tRNA-specific 2-thiouridylase MnmA (389 aa).

ATP is bound by residues 35 to 42 (GMSGGVDS) and M61. Residues 121 to 123 (NPD) form an interaction with target base in tRNA region. Residue C126 is the Nucleophile of the active site. A disulfide bridge links C126 with C223. G151 provides a ligand contact to ATP. Positions 173-175 (KDQ) are interaction with tRNA. The active-site Cysteine persulfide intermediate is C223. The interval 335–336 (RY) is interaction with tRNA.

Belongs to the MnmA/TRMU family.

The protein resides in the cytoplasm. It catalyses the reaction S-sulfanyl-L-cysteinyl-[protein] + uridine(34) in tRNA + AH2 + ATP = 2-thiouridine(34) in tRNA + L-cysteinyl-[protein] + A + AMP + diphosphate + H(+). Catalyzes the 2-thiolation of uridine at the wobble position (U34) of tRNA, leading to the formation of s(2)U34. The chain is tRNA-specific 2-thiouridylase MnmA from Actinobacillus succinogenes (strain ATCC 55618 / DSM 22257 / CCUG 43843 / 130Z).